A 154-amino-acid polypeptide reads, in one-letter code: Lymphocyte antigen 6K (154 aa).

Residues 1–20 (MAFLVALLVVLGLQLVQSNA) form the signal peptide. The UPAR/Ly6 domain occupies 21-117 (LTCHVCEAQN…NGEGPPTDQL (97 aa)). A lipid anchor (GPI-anchor amidated glycine) is attached at G123. Positions 124-154 (KASGRRHRYIELLLTGFMVLTANGLSALCLL) are cleaved as a propeptide — removed in mature form.

Interacts with ADAM3 and TEX101. Strongly expressed in testes and weakly expressed in the epididymis, ovary, and uterus. Expressed in testicular germ cells (TGCs). Expressed in the testicular seminiferous tubules, in spermatocytes, spermatids, and testicular spermatozoa.

The protein resides in the secreted. It is found in the cytoplasm. The protein localises to the cell membrane. Its subcellular location is the cytoplasmic vesicle. It localises to the secretory vesicle. The protein resides in the acrosome. It is found in the membrane raft. Its function is as follows. Required for sperm migration into the oviduct and male fertility by controlling binding of sperm to zona pellucida. May play a role in cell growth. The protein is Lymphocyte antigen 6K of Mus musculus (Mouse).